Consider the following 289-residue polypeptide: Arabinogalactan O-methyltransferase 1 (289 aa).

Residues 12–32 (IITGVLLAGLVGGALLFTSFI) form a helical membrane-spanning segment.

This sequence belongs to the methyltransferase superfamily. Binds to the translation initiation factors TIF3E1.

It localises to the golgi apparatus membrane. Involved in the methylation of glucuronic acid of different plant cell wall component, but mainly on side chains of arabinogalactans. This chain is Arabinogalactan O-methyltransferase 1 (AGM1), found in Arabidopsis thaliana (Mouse-ear cress).